The sequence spans 383 residues: Multidrug resistance protein MexA (383 aa).

A signal peptide spans 1-23 (MQRTPAMRVLVPALLVAISALSG). Residue Cys24 is the site of N-palmitoyl cysteine attachment. The S-diacylglycerol cysteine moiety is linked to residue Cys24. Positions 97 to 151 (ATYEADYQSAQANLASTQEQAQRYKLLVADQAVSKQQYADANAAYLQSKAAVEQA) form a coiled coil.

It belongs to the membrane fusion protein (MFP) (TC 8.A.1) family. As to quaternary structure, component of the MexAB-OprM multidrug efflux complex, composed of six MexA subunits forming a hexameric tube, binding to a MexB trimer, which interact with the trimeric OprM outer membrane channel protein. OprM is thought to not directly contact MexB; instead, MexA joins MexB and OprM by forming a funnel-like hexamer anchored to the inner membrane. MexA may initially form a hexameric ring complex with MexB prior to OprM, then OprM undergoes a conformational change as it contacts MexA, allowing the periplasmic gate to open. It is thought that, under high intracellular substrate concentration, MexB ejects substrate into the tunnel formed by MexA-OprM; as the substrate level declines, conformational changes in MexB cause efflux to reduce and stop and the complex shifts to the closed state. MexB subunit acts as a substrate:proton antiporter and activity is enhanced significantly when in complex with MexA and OprM, in vitro.

The protein localises to the cell inner membrane. Export of antibiotics and solvents is dramatically decreased in the presence of the protonophore carbonyl cyanide m-chlorophenylhydrazone (CCCP), therefore may be driven by a proton gradient. Antibiotic efflux is inhibited by pyridopyrimidine derivatives, such as ABI-PP, acting by binding to a hydrophobic pocket in MexB. In terms of biological role, the periplasmic linker component of the MexAB-OprM efflux system that confers multidrug resistance. Functions as the major efflux pump for n-hexane and p-xylene efflux. Has been shown in one study to be involved in the active efflux of the autoinducer N-(3-oxododecanoyl) homoserine lactone, thereby playing an indirect role in quorum-sensing; but has been shown in another study not to be involved in efflux of this autoinducer. Over-expression of the pump increases antibiotic and solvent efflux capacities. Implicated in the secretion of the siderophore pyoverdine. The polypeptide is Multidrug resistance protein MexA (mexA) (Pseudomonas aeruginosa (strain ATCC 15692 / DSM 22644 / CIP 104116 / JCM 14847 / LMG 12228 / 1C / PRS 101 / PAO1)).